We begin with the raw amino-acid sequence, 525 residues long: Glucose-6-phosphate isomerase (525 aa).

E356 functions as the Proton donor in the catalytic mechanism. Catalysis depends on residues H387 and K502.

The protein belongs to the GPI family.

It is found in the cytoplasm. The enzyme catalyses alpha-D-glucose 6-phosphate = beta-D-fructose 6-phosphate. It functions in the pathway carbohydrate biosynthesis; gluconeogenesis. The protein operates within carbohydrate degradation; glycolysis; D-glyceraldehyde 3-phosphate and glycerone phosphate from D-glucose: step 2/4. Functionally, catalyzes the reversible isomerization of glucose-6-phosphate to fructose-6-phosphate. This is Glucose-6-phosphate isomerase from Treponema denticola (strain ATCC 35405 / DSM 14222 / CIP 103919 / JCM 8153 / KCTC 15104).